Here is a 315-residue protein sequence, read N- to C-terminus: Olfactory receptor 52R1 (315 aa).

Over 1–28 the chain is Extracellular; that stretch reads MVLASGNSSSHPVSFILLGIPGLESFQL. Residue Asn7 is glycosylated (N-linked (GlcNAc...) asparagine). The helical transmembrane segment at 29-49 threads the bilayer; the sequence is WIAFPFCATYAVAVVGNITLL. At 50-57 the chain is on the cytoplasmic side; that stretch reads HVIRIDHT. The chain crosses the membrane as a helical span at residues 58–78; the sequence is LHEPMYLFLAMLAITDLVLSS. At 79 to 102 the chain is on the extracellular side; the sequence is STQPKMLAIFWFHAHEIQYHACLI. Residues Cys100 and Cys192 are joined by a disulfide bond. Residues 103–123 traverse the membrane as a helical segment; sequence QVFFIHAFSSVESGVLMAMAL. Over 124–142 the chain is Cytoplasmic; that stretch reads DCYVAICFPLRHSSILTPS. The helical transmembrane segment at 143–163 threads the bilayer; sequence VVIKLGTIVMLRGLLWVSPFC. Topologically, residues 164-199 are extracellular; that stretch reads FMVSRMPFCQHQAIPQSYCEHMAVLKLVCADTSISR. A helical membrane pass occupies residues 200-220; sequence GNGLFVAFSVAGFDMIVIGMS. Residues 221 to 240 are Cytoplasmic-facing; the sequence is YVMILRAVLQLPSGEARLKA. Residues 241–261 form a helical membrane-spanning segment; sequence FSTRSSHICVILALYIPALFS. The Extracellular portion of the chain corresponds to 262–276; it reads FLTYRFGHDVPRVVH. Residues 277–297 form a helical membrane-spanning segment; sequence ILFANLYLLIPPMLNPIIYGV. Topologically, residues 298–315 are cytoplasmic; that stretch reads RTKQIGDRVIQGCCGNIP.

Belongs to the G-protein coupled receptor 1 family.

The protein localises to the cell membrane. Odorant receptor. In Homo sapiens (Human), this protein is Olfactory receptor 52R1 (OR52R1).